We begin with the raw amino-acid sequence, 308 residues long: 34.2 kDa protein in rubredoxin operon (308 aa).

A disulfide bond links cysteine 136 and cysteine 139. FAD is bound at residue 268–278 (TNIKGVFAAGD).

The protein belongs to the class-II pyridine nucleotide-disulfide oxidoreductase family.

In Clostridium pasteurianum, this protein is 34.2 kDa protein in rubredoxin operon.